The following is a 215-amino-acid chain: Large ribosomal subunit protein uL1 (215 aa).

It belongs to the universal ribosomal protein uL1 family. As to quaternary structure, part of the 50S ribosomal subunit.

Its function is as follows. Binds directly to 23S rRNA. Probably involved in E site tRNA release. In terms of biological role, protein L1 is also a translational repressor protein, it controls the translation of its operon by binding to its mRNA. The sequence is that of Large ribosomal subunit protein uL1 from Staphylothermus marinus (strain ATCC 43588 / DSM 3639 / JCM 9404 / F1).